The following is a 227-amino-acid chain: Ion-translocating oxidoreductase complex subunit E (227 aa).

5 consecutive transmembrane segments (helical) span residues 34-56 (AINA…TIIS), 68-88 (IPIY…LLHA), 91-111 (FNLY…CIIV), 127-147 (FFDG…VGSI), and 181-201 (TIIL…LIAI).

The protein belongs to the NqrDE/RnfAE family. As to quaternary structure, the complex is composed of six subunits: RnfA, RnfB, RnfC, RnfD, RnfE and RnfG.

The protein resides in the cell inner membrane. Its function is as follows. Part of a membrane-bound complex that couples electron transfer with translocation of ions across the membrane. In Buchnera aphidicola subsp. Acyrthosiphon pisum (strain APS) (Acyrthosiphon pisum symbiotic bacterium), this protein is Ion-translocating oxidoreductase complex subunit E.